The following is a 246-amino-acid chain: tRNA (guanine-N(1)-)-methyltransferase (246 aa).

Residues Gly117 and 137–142 (IGDYVL) each bind S-adenosyl-L-methionine.

The protein belongs to the RNA methyltransferase TrmD family. In terms of assembly, homodimer.

The protein localises to the cytoplasm. It catalyses the reaction guanosine(37) in tRNA + S-adenosyl-L-methionine = N(1)-methylguanosine(37) in tRNA + S-adenosyl-L-homocysteine + H(+). Specifically methylates guanosine-37 in various tRNAs. The protein is tRNA (guanine-N(1)-)-methyltransferase of Acinetobacter baumannii (strain ACICU).